The sequence spans 366 residues: Aminomethyltransferase (366 aa).

Belongs to the GcvT family. In terms of assembly, the glycine cleavage system is composed of four proteins: P, T, L and H.

The enzyme catalyses N(6)-[(R)-S(8)-aminomethyldihydrolipoyl]-L-lysyl-[protein] + (6S)-5,6,7,8-tetrahydrofolate = N(6)-[(R)-dihydrolipoyl]-L-lysyl-[protein] + (6R)-5,10-methylene-5,6,7,8-tetrahydrofolate + NH4(+). The glycine cleavage system catalyzes the degradation of glycine. In Bacillus cereus (strain B4264), this protein is Aminomethyltransferase.